A 344-amino-acid polypeptide reads, in one-letter code: MNSNEIENFIYLNNTLLSEVPEPNSVFYTPKCFSNSKLPHQSDLEEPSSACSLSKNTIIDGGADEPYDSSDSCATFEFADFFKDNLDDFALDGPIININHVNQTSPYTHHNAEPLHDLQTFSSNLNHSNNRRQTICNFNMANDASKENETPYMVLNNKFNPVLTTEYTQQHLVQCKMVLENHITSRFPHFYTKLPDVSLVPNNMPHYPDEVTAKSAPKDDFYVPRFTRGHGISKLGLCPICSHQGEFIWLRTKTSAYWYHMNFVHGIHSKGRPYQPPIEFRTVRLRKTRNAIGVPNKKYMIEGKCHQCNKWIRCQGRKDVSVKIPEIFWWRHAHRCHIITTDLR.

Its subcellular location is the nucleus. The sequence is that of Meiotic expression up-regulated protein 26 (meu26) from Schizosaccharomyces pombe (strain 972 / ATCC 24843) (Fission yeast).